The chain runs to 163 residues: Keratin-associated protein 11-1 (163 aa).

Tandem repeats lie at residues 111–120, 121–130, 131–140, and 141–150. Positions 111 to 150 are 4 X 10 AA approximate repeats; sequence CQPLGGISSVCQPVGGISTVCQPVGGVSTVCQPACGVSRT.

The protein belongs to the PMG family. In terms of tissue distribution, expressed in the upper matrix and in the entire hair cortex.

Functionally, in the hair cortex, hair keratin intermediate filaments are embedded in an interfilamentous matrix, consisting of hair keratin-associated proteins (KRTAP), which are essential for the formation of a rigid and resistant hair shaft through their extensive disulfide bond cross-linking with abundant cysteine residues of hair keratins. The matrix proteins include the high-sulfur and high-glycine-tyrosine keratins. This is Keratin-associated protein 11-1 (KRTAP11-1) from Homo sapiens (Human).